The chain runs to 216 residues: Holliday junction branch migration complex subunit RuvA (216 aa).

The segment at 1–64 is domain I; sequence MISFIKGVLI…EDAQQLYGFK (64 aa). Residues 65–143 are domain II; sequence SKVDKKVFQE…KMANEIYAQT (79 aa). A flexible linker region spans residues 144–163; sequence SGTTTTSQDSQAQQAPTSVV. The domain III stretch occupies residues 164 to 216; the sequence is LANSIFNESVDALLALGYKQKDAEKMARSAMGDATTAAEVIRKALQGSIKSKG.

It belongs to the RuvA family. In terms of assembly, homotetramer. Forms an RuvA(8)-RuvB(12)-Holliday junction (HJ) complex. HJ DNA is sandwiched between 2 RuvA tetramers; dsDNA enters through RuvA and exits via RuvB. An RuvB hexamer assembles on each DNA strand where it exits the tetramer. Each RuvB hexamer is contacted by two RuvA subunits (via domain III) on 2 adjacent RuvB subunits; this complex drives branch migration. In the full resolvosome a probable DNA-RuvA(4)-RuvB(12)-RuvC(2) complex forms which resolves the HJ.

The protein localises to the cytoplasm. Its function is as follows. The RuvA-RuvB-RuvC complex processes Holliday junction (HJ) DNA during genetic recombination and DNA repair, while the RuvA-RuvB complex plays an important role in the rescue of blocked DNA replication forks via replication fork reversal (RFR). RuvA specifically binds to HJ cruciform DNA, conferring on it an open structure. The RuvB hexamer acts as an ATP-dependent pump, pulling dsDNA into and through the RuvAB complex. HJ branch migration allows RuvC to scan DNA until it finds its consensus sequence, where it cleaves and resolves the cruciform DNA. This Francisella tularensis subsp. holarctica (strain FTNF002-00 / FTA) protein is Holliday junction branch migration complex subunit RuvA.